A 122-amino-acid polypeptide reads, in one-letter code: Large ribosomal subunit protein bL12 (122 aa).

Belongs to the bacterial ribosomal protein bL12 family. As to quaternary structure, homodimer. Part of the ribosomal stalk of the 50S ribosomal subunit. Forms a multimeric L10(L12)X complex, where L10 forms an elongated spine to which 2 to 4 L12 dimers bind in a sequential fashion. Binds GTP-bound translation factors.

Functionally, forms part of the ribosomal stalk which helps the ribosome interact with GTP-bound translation factors. Is thus essential for accurate translation. This Xylella fastidiosa (strain M23) protein is Large ribosomal subunit protein bL12.